Reading from the N-terminus, the 344-residue chain is Heat-inducible transcription repressor HrcA (344 aa).

This sequence belongs to the HrcA family.

In terms of biological role, negative regulator of class I heat shock genes (grpE-dnaK-dnaJ and groELS operons). Prevents heat-shock induction of these operons. This Streptococcus pyogenes serotype M1 protein is Heat-inducible transcription repressor HrcA.